Here is a 280-residue protein sequence, read N- to C-terminus: Homeobox protein Hox-B1b (280 aa).

The tract at residues 46–65 (GRLAAPTSAPHQSPGLPLHH) is disordered. Residues 170–175 (TFDWMK) carry the Antp-type hexapeptide motif. The homeobox DNA-binding region spans 195-254 (HNVIRTNFTTKQLTELEKEFHFNKYLTRARRVEVAASLELNETQVKIWFQNRRMKQKKRE). Residues 249-280 (KQKKREKLGGVLVHREKASGPESSPKAKESEP) are disordered. The segment covering 261–280 (VHREKASGPESSPKAKESEP) has biased composition (basic and acidic residues).

Belongs to the Antp homeobox family. Labial subfamily.

The protein localises to the nucleus. Its function is as follows. Sequence-specific transcription factor which is part of a developmental regulatory system that provides cells with specific positional identities on the anterior-posterior axis. The protein is Homeobox protein Hox-B1b (hoxb1b) of Takifugu rubripes (Japanese pufferfish).